Consider the following 513-residue polypeptide: HMG box-containing protein 1 (513 aa).

Positions 151 to 181 (RPPPVSSAKSGPAFPHDHWKEETPVRHERAN) are disordered. The segment covering 165 to 181 (PHDHWKEETPVRHERAN) has biased composition (basic and acidic residues). An AXH domain is found at 202–343 (WCNSWPSTVW…PPGHPDAINF (142 aa)). Positions 433–501 (CKRPMNAFML…EQKRLNPDCW (69 aa)) form a DNA-binding region, HMG box.

As to quaternary structure, binds TCF4. Binds RB1. Binds the second PAH repeat of SIN3A. Ubiquitinated by the CTLH E3 ubiquitin-protein ligase complex, leading to subsequent proteasomal degradation. As to expression, highly expressed in liver, adipose tissue, lung, brain, spleen, kidney, skeletal muscle and heart.

It localises to the nucleus. Transcriptional repressor that binds to the promoter region of target genes. Plays a role in the regulation of the cell cycle and of the Wnt pathway. Binds preferentially to the sequence 5'-TTCATTCATTCA-3'. Binding to the histone H1.0 promoter is enhanced by interaction with RB1. Disrupts the interaction between DNA and TCF4. The sequence is that of HMG box-containing protein 1 (Hbp1) from Rattus norvegicus (Rat).